Reading from the N-terminus, the 269-residue chain is Protein OPG079 (269 aa).

Belongs to the orthopoxvirus OPG079 family. Homoomultimer (Potential). Interacts with the small subunit of ribonucleotide reductase.

It localises to the host cytoplasm. Its function is as follows. Plays an essential role in viral DNA replication. Binds to ssDNA with high affinity and localizes to cytoplasmic factories where nascent viral genomes accumulate. May disrupt loops, hairpins and other secondary structures present on ssDNA to reduce and eliminate pausing of viral DNA polymerase at specific sites during elongation. The chain is Protein OPG079 (OPG079) from Cynomys gunnisoni (Gunnison's prairie dog).